The sequence spans 199 residues: MARILVLKSSINGSQSQTSTLIDTFLAERQANGHADDVIVRNLVDADLPMLDSELFHALRGAANPSERAQRAIVLSDELIAELKGSDLLLIGAPMYNLNVPTQLKNWFDLVARARVTFRYTETYPVGLVEGISAIVFSSRGGVHVGQDTDAVTPYLRAVLGLMGIVDVEFVYAEGLDMKPHGFDAGLADARRQMDALHA.

Residues serine 10, 95-98 (MYNL), and 139-142 (SRGG) each bind FMN.

It belongs to the azoreductase type 1 family. As to quaternary structure, homodimer. Requires FMN as cofactor.

The catalysed reaction is 2 a quinone + NADH + H(+) = 2 a 1,4-benzosemiquinone + NAD(+). It catalyses the reaction N,N-dimethyl-1,4-phenylenediamine + anthranilate + 2 NAD(+) = 2-(4-dimethylaminophenyl)diazenylbenzoate + 2 NADH + 2 H(+). Its function is as follows. Quinone reductase that provides resistance to thiol-specific stress caused by electrophilic quinones. Functionally, also exhibits azoreductase activity. Catalyzes the reductive cleavage of the azo bond in aromatic azo compounds to the corresponding amines. This is FMN-dependent NADH:quinone oxidoreductase 4 from Burkholderia lata (strain ATCC 17760 / DSM 23089 / LMG 22485 / NCIMB 9086 / R18194 / 383).